The sequence spans 213 residues: ATP phosphoribosyltransferase (213 aa).

The protein belongs to the ATP phosphoribosyltransferase family. Short subfamily. In terms of assembly, heteromultimer composed of HisG and HisZ subunits.

The protein localises to the cytoplasm. It catalyses the reaction 1-(5-phospho-beta-D-ribosyl)-ATP + diphosphate = 5-phospho-alpha-D-ribose 1-diphosphate + ATP. The protein operates within amino-acid biosynthesis; L-histidine biosynthesis; L-histidine from 5-phospho-alpha-D-ribose 1-diphosphate: step 1/9. Catalyzes the condensation of ATP and 5-phosphoribose 1-diphosphate to form N'-(5'-phosphoribosyl)-ATP (PR-ATP). Has a crucial role in the pathway because the rate of histidine biosynthesis seems to be controlled primarily by regulation of HisG enzymatic activity. The protein is ATP phosphoribosyltransferase of Bacillus velezensis (strain DSM 23117 / BGSC 10A6 / LMG 26770 / FZB42) (Bacillus amyloliquefaciens subsp. plantarum).